The primary structure comprises 292 residues: Light-independent protochlorophyllide reductase iron-sulfur ATP-binding protein (292 aa).

ATP is bound by residues 10 to 15 (GIGKST) and Lys-39. Ser-14 contributes to the Mg(2+) binding site. [4Fe-4S] cluster is bound at residue Cys-95. Residue 182–183 (NR) participates in ATP binding.

It belongs to the NifH/BchL/ChlL family. Homodimer. Protochlorophyllide reductase is composed of three subunits; ChlL, ChlN and ChlB. It depends on [4Fe-4S] cluster as a cofactor.

The protein resides in the plastid. The protein localises to the chloroplast. The catalysed reaction is chlorophyllide a + oxidized 2[4Fe-4S]-[ferredoxin] + 2 ADP + 2 phosphate = protochlorophyllide a + reduced 2[4Fe-4S]-[ferredoxin] + 2 ATP + 2 H2O. The protein operates within porphyrin-containing compound metabolism; chlorophyll biosynthesis (light-independent). Its function is as follows. Component of the dark-operative protochlorophyllide reductase (DPOR) that uses Mg-ATP and reduced ferredoxin to reduce ring D of protochlorophyllide (Pchlide) to form chlorophyllide a (Chlide). This reaction is light-independent. The L component serves as a unique electron donor to the NB-component of the complex, and binds Mg-ATP. In Huperzia lucidula (Shining clubmoss), this protein is Light-independent protochlorophyllide reductase iron-sulfur ATP-binding protein.